Consider the following 260-residue polypeptide: Proteasome subunit alpha (260 aa).

It belongs to the peptidase T1A family. In terms of assembly, the 20S proteasome core is composed of 14 alpha and 14 beta subunits that assemble into four stacked heptameric rings, resulting in a barrel-shaped structure. The two inner rings, each composed of seven catalytic beta subunits, are sandwiched by two outer rings, each composed of seven alpha subunits. The catalytic chamber with the active sites is on the inside of the barrel. Has a gated structure, the ends of the cylinder being occluded by the N-termini of the alpha-subunits. Is capped at one or both ends by the proteasome regulatory ATPase, PAN.

It is found in the cytoplasm. The formation of the proteasomal ATPase PAN-20S proteasome complex, via the docking of the C-termini of PAN into the intersubunit pockets in the alpha-rings, triggers opening of the gate for substrate entry. Interconversion between the open-gate and close-gate conformations leads to a dynamic regulation of the 20S proteasome proteolysis activity. Its function is as follows. Component of the proteasome core, a large protease complex with broad specificity involved in protein degradation. This chain is Proteasome subunit alpha, found in Thermococcus sp. (strain JCM 11816 / KS-1).